The chain runs to 430 residues: Gamma-glutamyl phosphate reductase (430 aa).

Belongs to the gamma-glutamyl phosphate reductase family.

It is found in the cytoplasm. It carries out the reaction L-glutamate 5-semialdehyde + phosphate + NADP(+) = L-glutamyl 5-phosphate + NADPH + H(+). The protein operates within amino-acid biosynthesis; L-proline biosynthesis; L-glutamate 5-semialdehyde from L-glutamate: step 2/2. Catalyzes the NADPH-dependent reduction of L-glutamate 5-phosphate into L-glutamate 5-semialdehyde and phosphate. The product spontaneously undergoes cyclization to form 1-pyrroline-5-carboxylate. This Rhodopseudomonas palustris (strain ATCC BAA-98 / CGA009) protein is Gamma-glutamyl phosphate reductase.